A 238-amino-acid polypeptide reads, in one-letter code: Small ribosomal subunit protein uS2 (238 aa).

It belongs to the universal ribosomal protein uS2 family.

The sequence is that of Small ribosomal subunit protein uS2 from Actinobacillus pleuropneumoniae serotype 7 (strain AP76).